The chain runs to 194 residues: MSLIPMVVEQTGRGERAYDIFSRLLKDRIIFLGGAVDDQVANLIIAQMLFLESEDPEKEIFLYINSPGGVVTAGMAIYDTMQYVRCPVSTLCVGQAASMGAVLLAAGGEGKRFALPHARIMIHQPWGGFQGQATDINIHAQEILRLRETLNGVLASHTGQTLEKIATDTERDFFMGSEEAKKYGIVDDIVKRKV.

The active-site Nucleophile is S98. H123 is a catalytic residue.

It belongs to the peptidase S14 family. In terms of assembly, fourteen ClpP subunits assemble into 2 heptameric rings which stack back to back to give a disk-like structure with a central cavity, resembling the structure of eukaryotic proteasomes.

It is found in the cytoplasm. It carries out the reaction Hydrolysis of proteins to small peptides in the presence of ATP and magnesium. alpha-casein is the usual test substrate. In the absence of ATP, only oligopeptides shorter than five residues are hydrolyzed (such as succinyl-Leu-Tyr-|-NHMec, and Leu-Tyr-Leu-|-Tyr-Trp, in which cleavage of the -Tyr-|-Leu- and -Tyr-|-Trp bonds also occurs).. In terms of biological role, cleaves peptides in various proteins in a process that requires ATP hydrolysis. Has a chymotrypsin-like activity. Plays a major role in the degradation of misfolded proteins. This chain is ATP-dependent Clp protease proteolytic subunit, found in Syntrophotalea carbinolica (strain DSM 2380 / NBRC 103641 / GraBd1) (Pelobacter carbinolicus).